Consider the following 376-residue polypeptide: 23S rRNA (uracil(747)-C(5))-methyltransferase RlmC (376 aa).

[4Fe-4S] cluster is bound by residues C3, C11, C14, and C87. S-adenosyl-L-methionine contacts are provided by Q212, F241, E262, and N307. The active-site Nucleophile is C334.

The protein belongs to the class I-like SAM-binding methyltransferase superfamily. RNA M5U methyltransferase family. RlmC subfamily.

It catalyses the reaction uridine(747) in 23S rRNA + S-adenosyl-L-methionine = 5-methyluridine(747) in 23S rRNA + S-adenosyl-L-homocysteine + H(+). Its function is as follows. Catalyzes the formation of 5-methyl-uridine at position 747 (m5U747) in 23S rRNA. The chain is 23S rRNA (uracil(747)-C(5))-methyltransferase RlmC from Yersinia pseudotuberculosis serotype I (strain IP32953).